The sequence spans 915 residues: WD repeat-containing protein 44 (915 aa).

Residues 1-14 (MASESDTEEFYDAP) show a composition bias toward acidic residues. The disordered stretch occupies residues 1–24 (MASESDTEEFYDAPEDVHLGTGYP). Position 2 is an N-acetylalanine (Ala-2). Positions 2-173 (ASESDTEEFY…SSGEQLDASG (172 aa)) are binding activity. Ser-3 carries the post-translational modification Phosphoserine. Positions 9–15 (EFYDAPE) match the FFAT-like motif motif. The residue at position 11 (Tyr-11) is a Phosphotyrosine. 6 positions are modified to phosphoserine: Ser-27, Ser-50, Ser-66, Ser-71, Ser-81, and Ser-126. Disordered regions lie at residues 79-102 (DDSL…VAGT), 117-174 (LQQD…ASGL), and 208-282 (VEEV…PKEN). The stretch at 114-139 (EHELQQDSEKAESQNVAEESELETQK) forms a coiled coil. Positions 146–155 (TCEKSEKTVD) are enriched in basic and acidic residues. Phosphothreonine is present on residues Thr-161 and Thr-221. The segment at 213-259 (PAKPPRHLTPEPDIVASTKKPVPARPPPPTNFPPPRPPPPSRPAPPP) is important for interaction with ARHGAP26 AND ARHGAP10. Over residues 235-258 (PARPPPPTNFPPPRPPPPSRPAPP) the composition is skewed to pro residues. Ser-264 carries the phosphoserine modification. A compositionally biased stretch (basic and acidic residues) spans 264–280 (SELEFEALKTPDLDVPK). Thr-273 is modified (phosphothreonine). An important for interaction with RAB11A region spans residues 336 to 349 (VMGPQRPRSNSGRE). Phosphoserine is present on residues Ser-344 and Ser-346. A phosphothreonine mark is found at Thr-351 and Thr-403. Disordered regions lie at residues 399–425 (SNDA…RLKQ) and 461–481 (DEVF…GMPY). Phosphoserine is present on residues Ser-405, Ser-472, Ser-473, and Ser-474. Residues 469 to 478 (DDPSSSDDEG) are compositionally biased toward acidic residues. The residue at position 481 (Tyr-481) is a Phosphotyrosine. The WD 1 repeat unit spans residues 511-550 (EHMGAVWTMKFSHCGRLLASAGQDNIVRIWALKNAFDYFN). The tract at residues 559 to 593 (EGRVSPSPSQESLSSSKSDTDMGVCSGTDEDPDDK) is disordered. 2 positions are modified to phosphoserine: Ser-563 and Ser-567. Positions 563–575 (SPSPSQESLSSSK) are enriched in low complexity. WD repeat units lie at residues 607–645 (GHTA…CLCC), 647–687 (QHID…VALW), 692–731 (GQTK…YHTQ), 742–781 (KVGR…LSMK), 786–825 (VNSS…SKFT), 840–880 (AHNA…EVLD), and 882–915 (TSTG…KTVS).

As to quaternary structure, interacts with the GTP-bound form of RAB11 when membrane-associated. Interacts with GRAF1/ARHGAP26 or GRAF2/ARHGAP10; the interaction connects the endoplasmic reticulum (ER) with the endosomal tubule. Interacts (via FFAT-like motif) with VAPA (via MSP domain) or VAPB (via MSP domain); the interaction connects the ER with the endosomal tubule. Does not bind to other Rab and Rho small G proteins. Phosphorylated by ATK1; the phosphorylation stabilizes its interaction with RAB11A and RAB11B.

The protein resides in the cytoplasm. The protein localises to the cytosol. Its subcellular location is the perinuclear region. It localises to the endosome membrane. It is found in the golgi apparatus. The protein resides in the trans-Golgi network. Downstream effector for Rab11 which regulates Rab11 intracellular membrane trafficking functions such as endocytic recycling, intracellular ciliogenesis and protein export. ATK1-mediated phosphorylation of WDR44 induces binding to Rab11 which activates endocytic recycling of transferrin receptor back to the plasma membrane. When bound to Rab11, prevents the formation of the ciliogenic Rab11-Rabin8/RAB3IP-RAB11FIP3 complex, therefore inhibiting preciliary trafficking and ciliogenesis. Participates in neo-synthesized protein export by connecting the endoplasmic reticulum (ER) with the endosomal tubule via direct interactions with the integral ER proteins VAPA or VAPB and the endosomal protein GRAFs (GRAF1/ARHGAP26 or GRAF2/ARHGAP10), which facilitates the transfer of proteins such as E-cadherin, MPP14 and CFTR into a Rab8-Rab10-Rab11-dependent export route. This is WD repeat-containing protein 44 from Mus musculus (Mouse).